Here is a 440-residue protein sequence, read N- to C-terminus: Phosphoglucosamine mutase (440 aa).

S97 serves as the catalytic Phosphoserine intermediate. Residues S97, D237, D239, and D241 each contribute to the Mg(2+) site. Residue S97 is modified to Phosphoserine.

The protein belongs to the phosphohexose mutase family. Mg(2+) serves as cofactor. Activated by phosphorylation.

It catalyses the reaction alpha-D-glucosamine 1-phosphate = D-glucosamine 6-phosphate. In terms of biological role, catalyzes the conversion of glucosamine-6-phosphate to glucosamine-1-phosphate. The protein is Phosphoglucosamine mutase of Nautilia profundicola (strain ATCC BAA-1463 / DSM 18972 / AmH).